The sequence spans 773 residues: 5-methyltetrahydropteroyltriglutamate--homocysteine methyltransferase (773 aa).

5-methyltetrahydropteroyltri-L-glutamate contacts are provided by residues 16–19 (RELK) and Lys116. Residues 437–439 (IGS) and Glu490 each bind L-homocysteine. Residues 437 to 439 (IGS) and Glu490 each bind L-methionine. Residues 521–522 (RC) and Trp567 each bind 5-methyltetrahydropteroyltri-L-glutamate. L-homocysteine is bound at residue Asp605. Asp605 is an L-methionine binding site. Glu611 is a 5-methyltetrahydropteroyltri-L-glutamate binding site. Positions 647, 649, and 671 each coordinate Zn(2+). His700 functions as the Proton donor in the catalytic mechanism. Cys732 is a Zn(2+) binding site.

It belongs to the vitamin-B12 independent methionine synthase family. Zn(2+) is required as a cofactor.

It catalyses the reaction 5-methyltetrahydropteroyltri-L-glutamate + L-homocysteine = tetrahydropteroyltri-L-glutamate + L-methionine. The protein operates within amino-acid biosynthesis; L-methionine biosynthesis via de novo pathway; L-methionine from L-homocysteine (MetE route): step 1/1. Functionally, catalyzes the transfer of a methyl group from 5-methyltetrahydrofolate to homocysteine resulting in methionine formation. In Alkalilimnicola ehrlichii (strain ATCC BAA-1101 / DSM 17681 / MLHE-1), this protein is 5-methyltetrahydropteroyltriglutamate--homocysteine methyltransferase.